Here is a 442-residue protein sequence, read N- to C-terminus: tRNA-2-methylthio-N(6)-dimethylallyladenosine synthase (442 aa).

Residues 3 to 120 (NKLYIRTFGC…LPNMLNDALN (118 aa)) form the MTTase N-terminal domain. Residues Cys12, Cys49, Cys83, Cys157, Cys161, and Cys164 each coordinate [4Fe-4S] cluster. The Radical SAM core domain occupies 143-375 (RTNSVTAFVS…QKTINNNTEH (233 aa)). Residues 378 to 440 (QLMIGSIQKV…GNSLMGDLLT (63 aa)) enclose the TRAM domain.

This sequence belongs to the methylthiotransferase family. MiaB subfamily. As to quaternary structure, monomer. Requires [4Fe-4S] cluster as cofactor.

The protein localises to the cytoplasm. It carries out the reaction N(6)-dimethylallyladenosine(37) in tRNA + (sulfur carrier)-SH + AH2 + 2 S-adenosyl-L-methionine = 2-methylsulfanyl-N(6)-dimethylallyladenosine(37) in tRNA + (sulfur carrier)-H + 5'-deoxyadenosine + L-methionine + A + S-adenosyl-L-homocysteine + 2 H(+). Catalyzes the methylthiolation of N6-(dimethylallyl)adenosine (i(6)A), leading to the formation of 2-methylthio-N6-(dimethylallyl)adenosine (ms(2)i(6)A) at position 37 in tRNAs that read codons beginning with uridine. The protein is tRNA-2-methylthio-N(6)-dimethylallyladenosine synthase of Vesicomyosocius okutanii subsp. Calyptogena okutanii (strain HA).